Reading from the N-terminus, the 141-residue chain is Putative antirestriction protein YubI (141 aa).

The protein belongs to the antirestriction protein family.

The polypeptide is Putative antirestriction protein YubI (yubI) (Escherichia coli (strain K12)).